The primary structure comprises 543 residues: uncharacterized protein (543 aa).

The PE domain occupies 1 to 93 (MSFVTAAPEM…GGAYSSAEAA (93 aa)). The interval 194–214 (GGAGGPGGPTDVPAGTGGAGG) is disordered.

This sequence belongs to the mycobacterial PE family. PGRS subfamily.

This is an uncharacterized protein from Mycobacterium tuberculosis (strain CDC 1551 / Oshkosh).